The primary structure comprises 158 residues: NAD(P)H-quinone oxidoreductase subunit J, chloroplastic (158 aa).

It belongs to the complex I 30 kDa subunit family. In terms of assembly, NDH is composed of at least 16 different subunits, 5 of which are encoded in the nucleus.

The protein localises to the plastid. It is found in the chloroplast thylakoid membrane. It carries out the reaction a plastoquinone + NADH + (n+1) H(+)(in) = a plastoquinol + NAD(+) + n H(+)(out). The catalysed reaction is a plastoquinone + NADPH + (n+1) H(+)(in) = a plastoquinol + NADP(+) + n H(+)(out). Functionally, NDH shuttles electrons from NAD(P)H:plastoquinone, via FMN and iron-sulfur (Fe-S) centers, to quinones in the photosynthetic chain and possibly in a chloroplast respiratory chain. The immediate electron acceptor for the enzyme in this species is believed to be plastoquinone. Couples the redox reaction to proton translocation, and thus conserves the redox energy in a proton gradient. This chain is NAD(P)H-quinone oxidoreductase subunit J, chloroplastic, found in Fagopyrum esculentum subsp. ancestrale (Wild buckwheat).